The primary structure comprises 378 residues: Secreted LysM effector ldpA (378 aa).

The N-terminal stretch at 1 to 19 (MMKSIRFLASALALCLVDA) is a signal peptide. Positions 118 to 131 (WTPPTTTTRSTSSS) are enriched in low complexity. The disordered stretch occupies residues 118 to 139 (WTPPTTTTRSTSSSAGNGVTTP). The 47-residue stretch at 152–198 (RFYLVVSGDSCYDIAAAQGISLDNFYTWNPAVGSSCGGLWPDYYVCV) folds into the LysM 1 domain. The interval 208 to 230 (TTTTTTTPTTTSTTTTTAGNGVT) is disordered. 2 consecutive LysM domains span residues 245 to 291 (KFYQ…YVCV) and 330 to 376 (KFYL…YVCV).

The protein belongs to the secreted LysM effector family.

Its subcellular location is the secreted. It localises to the cell wall. The protein resides in the extracellular space. It is found in the extracellular matrix. Its function is as follows. Cell wall chitin of A.fumigatus recruits lung eosinophils during infection and ldpA might have a role in sequestration of chitin and act as triggers of host immunity to dampen host defense. The polypeptide is Secreted LysM effector ldpA (Aspergillus fumigatus (strain ATCC MYA-4609 / CBS 101355 / FGSC A1100 / Af293) (Neosartorya fumigata)).